Here is a 361-residue protein sequence, read N- to C-terminus: Phosphoserine aminotransferase (361 aa).

Position 43 (Arg43) interacts with L-glutamate. Pyridoxal 5'-phosphate-binding positions include 77–78 (AS), Trp103, Thr153, Asp173, and Gln196. Residue Lys197 is modified to N6-(pyridoxal phosphate)lysine. 238 to 239 (NT) is a binding site for pyridoxal 5'-phosphate.

The protein belongs to the class-V pyridoxal-phosphate-dependent aminotransferase family. SerC subfamily. As to quaternary structure, homodimer. The cofactor is pyridoxal 5'-phosphate.

The protein resides in the cytoplasm. It carries out the reaction O-phospho-L-serine + 2-oxoglutarate = 3-phosphooxypyruvate + L-glutamate. The catalysed reaction is 4-(phosphooxy)-L-threonine + 2-oxoglutarate = (R)-3-hydroxy-2-oxo-4-phosphooxybutanoate + L-glutamate. It participates in amino-acid biosynthesis; L-serine biosynthesis; L-serine from 3-phospho-D-glycerate: step 2/3. It functions in the pathway cofactor biosynthesis; pyridoxine 5'-phosphate biosynthesis; pyridoxine 5'-phosphate from D-erythrose 4-phosphate: step 3/5. Catalyzes the reversible conversion of 3-phosphohydroxypyruvate to phosphoserine and of 3-hydroxy-2-oxo-4-phosphonooxybutanoate to phosphohydroxythreonine. This chain is Phosphoserine aminotransferase, found in Pseudomonas syringae pv. tomato (strain ATCC BAA-871 / DC3000).